Reading from the N-terminus, the 156-residue chain is Small ribosomal subunit protein uS7 (156 aa).

Belongs to the universal ribosomal protein uS7 family. As to quaternary structure, part of the 30S ribosomal subunit. Contacts proteins S9 and S11.

One of the primary rRNA binding proteins, it binds directly to 16S rRNA where it nucleates assembly of the head domain of the 30S subunit. Is located at the subunit interface close to the decoding center, probably blocks exit of the E-site tRNA. This is Small ribosomal subunit protein uS7 from Pseudomonas syringae pv. syringae (strain B728a).